Here is a 382-residue protein sequence, read N- to C-terminus: Anhydro-N-acetylmuramic acid kinase (382 aa).

22–29 (GTSMDGVD) serves as a coordination point for ATP.

Belongs to the anhydro-N-acetylmuramic acid kinase family.

It carries out the reaction 1,6-anhydro-N-acetyl-beta-muramate + ATP + H2O = N-acetyl-D-muramate 6-phosphate + ADP + H(+). Its pathway is amino-sugar metabolism; 1,6-anhydro-N-acetylmuramate degradation. It participates in cell wall biogenesis; peptidoglycan recycling. Catalyzes the specific phosphorylation of 1,6-anhydro-N-acetylmuramic acid (anhMurNAc) with the simultaneous cleavage of the 1,6-anhydro ring, generating MurNAc-6-P. Is required for the utilization of anhMurNAc either imported from the medium or derived from its own cell wall murein, and thus plays a role in cell wall recycling. This is Anhydro-N-acetylmuramic acid kinase from Burkholderia orbicola (strain MC0-3).